Consider the following 148-residue polypeptide: MSDWDTVTKIGSRAGPGARTHVAKTQSQINSARRAGAIVGTEKKYATGNKSQDPAGQHLTKIDRENEVKPPSTTGRSVAQAIQKGRQAKGWAQKDLSQRINEKPQVVNDYESGRAIPNQQVLSKMERALGIKLRGQNIGAPLGGPKKK.

Residues 1–97 (MSDWDTVTKI…AKGWAQKDLS (97 aa)) form a disordered region. The HTH cro/C1-type domain occupies 82 to 136 (IQKGRQAKGWAQKDLSQRINEKPQVVNDYESGRAIPNQQVLSKMERALGIKLRGQ). A DNA-binding region (H-T-H motif) is located at residues 93 to 112 (QKDLSQRINEKPQVVNDYES).

It belongs to the MBF1 family.

Transcriptional coactivator that stimulates GCN4-dependent transcriptional activity by bridging the DNA-binding region of GCN4 and TBP (SPT15), thereby recruiting TBP to GCN4-bound promoters. Involved in induction of the ribosome quality control (RQC) pathway; a pathway that degrades nascent peptide chains during problematic translation. Required to prevent stalled ribosomes from frameshifting. The polypeptide is Multiprotein-bridging factor 1 (mbf1) (Schizosaccharomyces pombe (strain 972 / ATCC 24843) (Fission yeast)).